A 186-amino-acid chain; its full sequence is Casparian strip membrane protein 1 (186 aa).

The Cytoplasmic portion of the chain corresponds to 1-26; that stretch reads MKSSPAELISEAKSSTQNSKMKRAVS. Residues 27 to 47 form a helical membrane-spanning segment; the sequence is VLDFILRLIAVVATLASAIAM. The Extracellular segment spans residues 48 to 74; it reads GTTDESLPFFTQFIRFRAEYDDLPTLR. Residues 75-95 traverse the membrane as a helical segment; it reads LFVVASAFASGYLILSLPLSI. At 96-107 the chain is on the cytoplasmic side; the sequence is LHITRSSARRTR. Residues 108–128 form a helical membrane-spanning segment; that stretch reads VILIILDMVMLTSLTAASSAA. Topologically, residues 129-161 are extracellular; that stretch reads AAIVYLAHKGNAKANWFAFCQQYDSFCERISGS. Residues 162 to 182 traverse the membrane as a helical segment; the sequence is LIGSFIAIPLFIMLILFSALV. At 183–186 the chain is on the cytoplasmic side; sequence LSKR.

This sequence belongs to the Casparian strip membrane proteins (CASP) family. In terms of assembly, homodimer and heterodimers.

The protein localises to the cell membrane. Its function is as follows. Regulates membrane-cell wall junctions and localized cell wall deposition. Required for establishment of the Casparian strip membrane domain (CSD) and the subsequent formation of Casparian strips, a cell wall modification of the root endodermis that determines an apoplastic barrier between the intraorganismal apoplasm and the extraorganismal apoplasm and prevents lateral diffusion. The polypeptide is Casparian strip membrane protein 1 (Lotus japonicus (Lotus corniculatus var. japonicus)).